The following is a 157-amino-acid chain: MKKITSFTIDHTKLNPGIYVSRKDTFENVIFTTIDIRIKAPNIEPIIENAAIHTIEHIGATLLRNNEVWTEKIVYFGPMGCRTGFYLIIFGNYESKDLIDLISWLFSEIVNFSEPIPGASHKECGNYKDHNLDMAKYESSKYLQILNNIKEENLKYP.

3 residues coordinate Fe cation: H53, H57, and C124.

This sequence belongs to the LuxS family. As to quaternary structure, homodimer. Fe cation is required as a cofactor.

It carries out the reaction S-(5-deoxy-D-ribos-5-yl)-L-homocysteine = (S)-4,5-dihydroxypentane-2,3-dione + L-homocysteine. Its function is as follows. Involved in the synthesis of autoinducer 2 (AI-2) which is secreted by bacteria and is used to communicate both the cell density and the metabolic potential of the environment. The regulation of gene expression in response to changes in cell density is called quorum sensing. Catalyzes the transformation of S-ribosylhomocysteine (RHC) to homocysteine (HC) and 4,5-dihydroxy-2,3-pentadione (DPD). This is S-ribosylhomocysteine lyase from Borrelia garinii subsp. bavariensis (strain ATCC BAA-2496 / DSM 23469 / PBi) (Borreliella bavariensis).